Reading from the N-terminus, the 318-residue chain is L-lactate dehydrogenase (318 aa).

3 residues coordinate NAD(+): valine 16, aspartate 37, and tyrosine 69. Residues glutamine 86, arginine 92, and 124 to 127 (NPVD) each bind substrate. NAD(+) is bound by residues 122–124 (ASN) and serine 147. 152-155 (DSAR) is a substrate binding site. Residue histidine 179 is the Proton acceptor of the active site. Tyrosine 223 carries the post-translational modification Phosphotyrosine. Threonine 232 contacts substrate.

It belongs to the LDH/MDH superfamily. LDH family. In terms of assembly, homotetramer.

Its subcellular location is the cytoplasm. The catalysed reaction is (S)-lactate + NAD(+) = pyruvate + NADH + H(+). Its pathway is fermentation; pyruvate fermentation to lactate; (S)-lactate from pyruvate: step 1/1. In terms of biological role, catalyzes the conversion of lactate to pyruvate. In Mycoplasma mycoides subsp. mycoides SC (strain CCUG 32753 / NCTC 10114 / PG1), this protein is L-lactate dehydrogenase.